We begin with the raw amino-acid sequence, 196 residues long: Probable malonic semialdehyde reductase RutE (196 aa).

Belongs to the nitroreductase family. HadB/RutE subfamily. Requires FMN as cofactor.

The catalysed reaction is 3-hydroxypropanoate + NADP(+) = 3-oxopropanoate + NADPH + H(+). Its function is as follows. May reduce toxic product malonic semialdehyde to 3-hydroxypropionic acid, which is excreted. In Escherichia coli O7:K1 (strain IAI39 / ExPEC), this protein is Probable malonic semialdehyde reductase RutE.